A 134-amino-acid chain; its full sequence is Arsenate reductase (134 aa).

Active-site nucleophile residues include cysteine 11, cysteine 83, and cysteine 90. 2 disulfide bridges follow: cysteine 11–cysteine 83 and cysteine 83–cysteine 90.

This sequence belongs to the low molecular weight phosphotyrosine protein phosphatase family. Thioredoxin-coupled ArsC subfamily.

Its subcellular location is the cytoplasm. The enzyme catalyses arsenate + [thioredoxin]-dithiol + H(+) = arsenite + [thioredoxin]-disulfide + H2O. In terms of biological role, catalyzes the reduction of arsenate [As(V)] to arsenite [As(III)]. The chain is Arsenate reductase from Bacillus anthracis (strain A0248).